A 485-amino-acid polypeptide reads, in one-letter code: Proline betaine:corrinoid methyltransferase (485 aa).

The protein belongs to the trimethylamine methyltransferase family. As to quaternary structure, the proline betaine:THF methyl transfer system is composed of two methyltransferases, MtpB and MtqA, and the corrinoid protein MtqC.

The catalysed reaction is Co(I)-[quaternary-amine-specific corrinoid protein] + L-proline betaine + H(+) = methyl-Co(III)-[quaternary-amine-specific corrinoid protein] + N-methyl-L-proline. Functionally, involved in the degradation of the quaternary amine L-proline betaine. Component of a corrinoid-dependent methyltransferase system that transfers a methyl group from L-proline betaine to tetrahydrofolate (THF), forming methyl-THF, a key intermediate in the Wood-Ljungdahl acetogenesis pathway. MtpB catalyzes the methylation of the corrinoid protein MtqC, using L-proline betaine as the methyl donor. Shows weak activity with some other quaternary amines, including carnitine, phosphocholine, glycine betaine or betonicine, but cannot methylate free cob(I)alamin. The sequence is that of Proline betaine:corrinoid methyltransferase from Eubacterium limosum.